A 157-amino-acid polypeptide reads, in one-letter code: Cytochrome P450 monooxygenase atG (157 aa).

Cys-97 lines the heme pocket.

Belongs to the cytochrome P450 family. Heme serves as cofactor.

Its pathway is secondary metabolite biosynthesis. Functionally, cytochrome P450 monooxygenase; part of the gene cluster that mediates the biosynthesis of terreic acid, a quinone epoxide inhibitor of Bruton's tyrosine kinase (BTK). The first step of the pathway is the synthesis of 6-methylsalicylic acid (6-MSA) by the 6-methylsalicylic acid synthase atX. In the biosynthesis of 6-MSA, atX utilizes one acetyl-CoA and three malonyl-CoAs as its substrates and catalyzes a series of programmed reactions including Claisen condensation, reduction, aldol cyclization, and the hydrolytic cleavage that yields 6-MSA. The 6-methylsalicylate 1-monooxygenase atA then catalyzes the decarboxylative hydroxylation of 6-MSA to 3-methylcatechol. The next step is the conversion of 3-methylcatechol to 3-methyl-1,2,4-benzenetriol by cytochrome P450 monooxygenase atE, which is enhanced by cytochrome P450 monooxygenase atG. Then, the epoxidase atD catalyzes the epoxidation and hydroxyl oxidation of 3-methyl-1,2,4-benzenetriol to terremutin. Lastly, GMC oxidoreductase atC oxidizes terremutin to terreic acid. The sequence is that of Cytochrome P450 monooxygenase atG from Aspergillus terreus (strain NIH 2624 / FGSC A1156).